The following is a 142-amino-acid chain: Hemoglobin subunit alpha-1 (142 aa).

An N-acetylserine modification is found at S1. The Globin domain maps to 1 to 142 (SLSDKDKAAV…VALALAERYR (142 aa)). H59 contacts O2. H88 serves as a coordination point for heme b.

This sequence belongs to the globin family. As to quaternary structure, hb1 is a heterotetramer of two alpha-1 chains and two beta chains. HbC is a heterotetramer of two alpha-1 chains and two beta-C chains. As to expression, red blood cells.

Involved in oxygen transport from gills to the various peripheral tissues. The chain is Hemoglobin subunit alpha-1 (hba1) from Trematomus newnesi (Dusky notothen).